The sequence spans 348 residues: NADH-ubiquinone oxidoreductase chain 2 (348 aa).

Helical transmembrane passes span 3-23 (PYVLMILLSSLGLGTTLTFAS), 60-80 (FLTQATAAAMILFASTTNAWM), 96-116 (TMFMTALALKIGLAPMHFWMP), 149-169 (IDPLLLTLLGVTSTLVGGWGG), 178-197 (ILAYSSIAHMGWMIIVIQYA), 202-219 (LLALGTYIIMTSAAFLTL), 246-266 (LVLLSLGGLPPLTGFMPKWLI), 274-294 (DLPIIATTMALAALISLYFYL), and 326-346 (LALFTMATLGLLPMTPAILTL).

It belongs to the complex I subunit 2 family.

It localises to the mitochondrion inner membrane. The enzyme catalyses a ubiquinone + NADH + 5 H(+)(in) = a ubiquinol + NAD(+) + 4 H(+)(out). Its function is as follows. Core subunit of the mitochondrial membrane respiratory chain NADH dehydrogenase (Complex I) that is believed to belong to the minimal assembly required for catalysis. Complex I functions in the transfer of electrons from NADH to the respiratory chain. The immediate electron acceptor for the enzyme is believed to be ubiquinone. This is NADH-ubiquinone oxidoreductase chain 2 (MT-ND2) from Carassius auratus (Goldfish).